The primary structure comprises 408 residues: Dual-specificity RNA methyltransferase RlmN (408 aa).

Glutamate 126 serves as the catalytic Proton acceptor. One can recognise a Radical SAM core domain in the interval glutamate 132 to arginine 373. Cysteine 139 and cysteine 384 are joined by a disulfide. [4Fe-4S] cluster-binding residues include cysteine 146, cysteine 150, and cysteine 153. S-adenosyl-L-methionine is bound by residues glycine 210 to glutamate 211, serine 242, serine 264 to histidine 266, and asparagine 341. The S-methylcysteine intermediate role is filled by cysteine 384.

It belongs to the radical SAM superfamily. RlmN family. It depends on [4Fe-4S] cluster as a cofactor.

The protein resides in the cytoplasm. The enzyme catalyses adenosine(2503) in 23S rRNA + 2 reduced [2Fe-2S]-[ferredoxin] + 2 S-adenosyl-L-methionine = 2-methyladenosine(2503) in 23S rRNA + 5'-deoxyadenosine + L-methionine + 2 oxidized [2Fe-2S]-[ferredoxin] + S-adenosyl-L-homocysteine. The catalysed reaction is adenosine(37) in tRNA + 2 reduced [2Fe-2S]-[ferredoxin] + 2 S-adenosyl-L-methionine = 2-methyladenosine(37) in tRNA + 5'-deoxyadenosine + L-methionine + 2 oxidized [2Fe-2S]-[ferredoxin] + S-adenosyl-L-homocysteine. Functionally, specifically methylates position 2 of adenine 2503 in 23S rRNA and position 2 of adenine 37 in tRNAs. m2A2503 modification seems to play a crucial role in the proofreading step occurring at the peptidyl transferase center and thus would serve to optimize ribosomal fidelity. This Bartonella tribocorum (strain CIP 105476 / IBS 506) protein is Dual-specificity RNA methyltransferase RlmN.